Here is a 515-residue protein sequence, read N- to C-terminus: 1-pyrroline-5-carboxylate dehydrogenase (515 aa).

Residues Glu-286 and Cys-320 contribute to the active site.

Belongs to the aldehyde dehydrogenase family. RocA subfamily.

It catalyses the reaction L-glutamate 5-semialdehyde + NAD(+) + H2O = L-glutamate + NADH + 2 H(+). It participates in amino-acid degradation; L-proline degradation into L-glutamate; L-glutamate from L-proline: step 2/2. This chain is 1-pyrroline-5-carboxylate dehydrogenase, found in Geobacillus sp. (strain WCH70).